The following is a 120-amino-acid chain: Ribonuclease P protein component 2 (120 aa).

The protein belongs to the eukaryotic/archaeal RNase P protein component 2 family. As to quaternary structure, homodimer in solution. Component of RNase P which consists of a catalytic RNA component and at least 5 protein subunits. Forms a heterotetrameric subcomplex with Rnp3. Reconstituted enzyme missing individual protein subunits is suboptimally active, showing each subunit contributes to optimization of activity.

It localises to the cytoplasm. It catalyses the reaction Endonucleolytic cleavage of RNA, removing 5'-extranucleotides from tRNA precursor.. Functionally, part of ribonuclease P, a protein complex that generates mature tRNA molecules by cleaving their 5'-ends. This is Ribonuclease P protein component 2 from Pyrococcus horikoshii (strain ATCC 700860 / DSM 12428 / JCM 9974 / NBRC 100139 / OT-3).